A 109-amino-acid polypeptide reads, in one-letter code: Nucleoid-associated protein Cvib_1034 (109 aa).

It belongs to the YbaB/EbfC family. Homodimer.

Its subcellular location is the cytoplasm. It localises to the nucleoid. In terms of biological role, binds to DNA and alters its conformation. May be involved in regulation of gene expression, nucleoid organization and DNA protection. The protein is Nucleoid-associated protein Cvib_1034 of Chlorobium phaeovibrioides (strain DSM 265 / 1930) (Prosthecochloris vibrioformis (strain DSM 265)).